The sequence spans 104 residues: Small ribosomal subunit protein uS10 (104 aa).

The protein belongs to the universal ribosomal protein uS10 family. In terms of assembly, part of the 30S ribosomal subunit.

Its function is as follows. Involved in the binding of tRNA to the ribosomes. This Hydrogenobaculum sp. (strain Y04AAS1) protein is Small ribosomal subunit protein uS10.